The chain runs to 93 residues: C-C motif chemokine 17 (93 aa).

A signal peptide spans 1 to 23; the sequence is MMSLQMLLLAALLLGTSLQHASA. 2 cysteine pairs are disulfide-bonded: cysteine 33–cysteine 57 and cysteine 34–cysteine 73.

The protein belongs to the intercrine beta (chemokine CC) family.

It localises to the secreted. Functionally, chemokine, which displays chemotactic activity for T lymphocytes, preferentially Th2 cells, but not monocytes or granulocytes. Therefore plays an important role in a wide range of inflammatory and immunological processes. Acts by binding to CCR4 at T-cell surface. Mediates GM-CSF/CSF2-driven pain and inflammation. In the brain, required to maintain the typical, highly branched morphology of hippocampal microglia under homeostatic conditions. May be important for the appropriate adaptation of microglial morphology and synaptic plasticity to acute lipopolysaccharide (LPS)-induced neuroinflammation. Plays a role in wound healing, mainly by inducing fibroblast migration into the wound. The protein is C-C motif chemokine 17 (Ccl17) of Rattus norvegicus (Rat).